The primary structure comprises 177 residues: uncharacterized protein (177 aa).

A signal peptide spans 1–22; sequence MCGVVVVIVALVPADPLLPAFA. The next 3 helical transmembrane spans lie at 31–51, 94–114, and 136–156; these read VFIP…TCVF, ISLM…LKFV, and LFPI…LLEI.

It is found in the membrane. This is an uncharacterized protein from Saccharomyces cerevisiae (strain ATCC 204508 / S288c) (Baker's yeast).